Reading from the N-terminus, the 504-residue chain is 2-methylcitrate dehydratase 2 (504 aa).

The protein belongs to the PrpD family. As to quaternary structure, monomer.

It catalyses the reaction (2S,3S)-2-methylcitrate = 2-methyl-cis-aconitate + H2O. It carries out the reaction citrate = D-threo-isocitrate. It participates in organic acid metabolism; propanoate degradation. The protein operates within carbohydrate metabolism; tricarboxylic acid cycle; isocitrate from oxaloacetate: step 1/2. Involved in the catabolism of short chain fatty acids (SCFA) via the 2-methylcitrate cycle I (propionate degradation route). Catalyzes the dehydration of 2-methylcitrate (2-MC) to yield the cis isomer 2-methyl-aconitate. Could also catalyze the dehydration of citrate and the hydration of cis-aconitate. The polypeptide is 2-methylcitrate dehydratase 2 (prpD2) (Corynebacterium glutamicum (strain ATCC 13032 / DSM 20300 / JCM 1318 / BCRC 11384 / CCUG 27702 / LMG 3730 / NBRC 12168 / NCIMB 10025 / NRRL B-2784 / 534)).